A 310-amino-acid polypeptide reads, in one-letter code: tRNA uridine(34) hydroxylase (310 aa).

Residues 124–218 form the Rhodanese domain; it reads SDPEVLLIDT…YFEEVPQEES (95 aa). C178 (cysteine persulfide intermediate) is an active-site residue.

Belongs to the TrhO family.

It catalyses the reaction uridine(34) in tRNA + AH2 + O2 = 5-hydroxyuridine(34) in tRNA + A + H2O. Catalyzes oxygen-dependent 5-hydroxyuridine (ho5U) modification at position 34 in tRNAs. The polypeptide is tRNA uridine(34) hydroxylase (Pseudomonas putida (strain ATCC 700007 / DSM 6899 / JCM 31910 / BCRC 17059 / LMG 24140 / F1)).